Consider the following 87-residue polypeptide: Mu-theraphotoxin-Hs1a (87 aa).

The signal sequence occupies residues M1 to A24. The propeptide occupies S25–R52. Cystine bridges form between C54–C67, C61–C72, and C66–C79.

This sequence belongs to the neurotoxin 10 (Hwtx-1) family. 51 (Hntx-8) subfamily. Hntx-8 sub-subfamily. As to expression, expressed by the venom gland.

It is found in the secreted. Probable sodium channel pore blocker that dose-dependently inhibits voltage-gated sodium channels (VGSC) on DUM neurons in a way similar to tetrodotoxin. Has no effect on the kinetics of activation and inactivation. Seems not to interact with VGSC in an inactivated state. In vivo, reversibly paralyzes cockroaches, and can enhance the muscular contraction elicited by stimulating its nerve. This chain is Mu-theraphotoxin-Hs1a, found in Cyriopagopus schmidti (Chinese bird spider).